Reading from the N-terminus, the 629-residue chain is uncharacterized protein (629 aa).

The residue at position 1 (Met1) is an N-acetylmethionine. Residues 308-395 (VDPEPEPDPP…PGRRSRARNA (88 aa)) are disordered. Positions 322-334 (SANEPASQPNSRS) are enriched in polar residues. A VWFA domain is found at 451 to 587 (LVIFVVDASG…VAEGAAAVVV (137 aa)).

The protein belongs to the Mg-chelatase subunits D/I family.

This is an uncharacterized protein from Mycobacterium tuberculosis (strain ATCC 25618 / H37Rv).